Consider the following 293-residue polypeptide: SAGA-associated factor 29 (293 aa).

Residues 3 to 88 adopt a coiled-coil conformation; sequence LVSADSRIAE…KALDKIAEIK (86 aa). One can recognise an SGF29 C-terminal domain in the interval 152 to 293; that stretch reads GDYVARPGDK…VVACKEPKKK (142 aa). 2 histone H3K4me3 N-terminus binding regions span residues 194–196 and 240–243; these read DID and QTTC. Positions 264-266 are histone H3K4me3 binding; the sequence is FED. Position 288 is an N6-acetyllysine (Lys288).

It belongs to the SGF29 family. Interacts with dimethylated and trimethylated 'Lys-4' of histone H3 (H3K4me2 and H3K4me3), with a preference for the trimethylated form (H3K4me3). Component of some SAGA-type complexes. Component of the ADA2A-containing complex (ATAC), composed of KAT14, KAT2A, TADA2L, TADA3L, ZZ3, MBIP, WDR5, YEATS2, CCDC101 and DR1. Interacts with (methylated) CGAS. Interacts with TADA3L, GCN5L2, SUPT3H and MYC.

The protein resides in the nucleus. Chromatin reader component of some histone acetyltransferase (HAT) SAGA-type complexes like the TFTC-HAT, ATAC or STAGA complexes. SGF29 specifically recognizes and binds methylated 'Lys-4' of histone H3 (H3K4me), with a preference for trimethylated form (H3K4me3). In the SAGA-type complexes, SGF29 is required to recruit complexes to H3K4me. Involved in the response to endoplasmic reticulum (ER) stress by recruiting the SAGA complex to H3K4me, thereby promoting histone H3 acetylation and cell survival. Also binds non-histone proteins that are methylated on Lys residues: specifically recognizes and binds CGAS monomethylated on 'Lys-506'. The protein is SAGA-associated factor 29 of Homo sapiens (Human).